The sequence spans 547 residues: Chaperonin GroEL 2 (547 aa).

ATP contacts are provided by residues 29–32 (TLGP), 86–90 (DGTTT), G418, 482–484 (NAA), and D498.

Belongs to the chaperonin (HSP60) family. As to quaternary structure, forms a cylinder of 14 subunits composed of two heptameric rings stacked back-to-back. Interacts with the co-chaperonin GroES.

The protein localises to the cytoplasm. The enzyme catalyses ATP + H2O + a folded polypeptide = ADP + phosphate + an unfolded polypeptide.. Its function is as follows. Together with its co-chaperonin GroES, plays an essential role in assisting protein folding. The GroEL-GroES system forms a nano-cage that allows encapsulation of the non-native substrate proteins and provides a physical environment optimized to promote and accelerate protein folding. The chain is Chaperonin GroEL 2 from Corynebacterium efficiens (strain DSM 44549 / YS-314 / AJ 12310 / JCM 11189 / NBRC 100395).